Reading from the N-terminus, the 458-residue chain is Probable alpha-L-glutamate ligase (458 aa).

A unknown region spans residues 1–162 (MSDNKFIIGS…YGVKTAKKSG (162 aa)). An alpha-L-glutamate ligase region spans residues 163 to 458 (LKIGLLASNP…IEKKLGWKAD (296 aa)). One can recognise an ATP-grasp domain in the interval 267 to 450 (LQLLQKNNLD…IAGAMIESIE (184 aa)). Residues lysine 304, 341-342 (EF), aspartate 350, and 374-376 (RAN) each bind ATP. The Mg(2+) site is built by aspartate 411, glutamate 423, and asparagine 425. Residues aspartate 411, glutamate 423, and asparagine 425 each contribute to the Mn(2+) site.

It in the C-terminal section; belongs to the RimK family. Mg(2+) is required as a cofactor. Mn(2+) serves as cofactor.

This is Probable alpha-L-glutamate ligase from Shewanella pealeana (strain ATCC 700345 / ANG-SQ1).